Reading from the N-terminus, the 355-residue chain is uncharacterized protein (355 aa).

3 helical membrane passes run 275–295 (SLIVLQSILAVVFGAGLFVAF), 301–321 (WNSIVALVLSVLVILGLVVGV), and 330–350 (IASTLIAVVVGALITLGPLAL).

It to M.tuberculosis Rv0497.

It localises to the cell membrane. This is an uncharacterized protein from Mycobacterium leprae (strain TN).